The sequence spans 505 residues: Maturase K (505 aa).

This sequence belongs to the intron maturase 2 family. MatK subfamily.

It localises to the plastid. The protein resides in the chloroplast. Functionally, usually encoded in the trnK tRNA gene intron. Probably assists in splicing its own and other chloroplast group II introns. The protein is Maturase K of Sciadopitys verticillata (Japanese umbrella-pine).